The following is a 96-amino-acid chain: Essential MCU regulator, mitochondrial (96 aa).

Residues 1 to 34 (MIVSRLTFPLQAAKLVARKAAGNPSNSIIQRRHM) constitute a mitochondrion transit peptide. A helical membrane pass occupies residues 52 to 72 (PFGLFAIFCAVIPGLFIGATI).

The protein belongs to the SMDT1/EMRE family.

The protein localises to the mitochondrion inner membrane. Essential regulatory subunit of the mitochondrial calcium uniporter (mcu) channel, a protein that mediates calcium uptake into mitochondria. The chain is Essential MCU regulator, mitochondrial from Drosophila pseudoobscura pseudoobscura (Fruit fly).